Here is a 523-residue protein sequence, read N- to C-terminus: Inosine-5'-monophosphate dehydrogenase 2 (523 aa).

CBS domains follow at residues 121–183 (FINN…VQDV) and 184–240 (MTKN…PLAS). Residues 278–280 (DSS) and 328–330 (GMG) each bind NAD(+). The K(+) site is built by Gly330 and Gly332. Ser333 is a binding site for IMP. Cys335 provides a ligand contact to K(+). Cys335 (thioimidate intermediate) is an active-site residue. Residues 368 to 370 (DGG), 391 to 392 (GG), and 415 to 419 (YRGMG) contribute to the IMP site. Arg437 (proton acceptor) is an active-site residue. Gln449 lines the IMP pocket. Residues Glu508, Gly509, and Gly510 each coordinate K(+).

It belongs to the IMPDH/GMPR family. Homotetramer. Seems to be able to form heterotetramers composed from more than 1 of the 3 IMPDH gene products (IMD2-4). Requires K(+) as cofactor.

The protein localises to the cytoplasm. It carries out the reaction IMP + NAD(+) + H2O = XMP + NADH + H(+). The protein operates within purine metabolism; XMP biosynthesis via de novo pathway; XMP from IMP: step 1/1. Mycophenolic acid (MPA) is a non-competitive inhibitor that prevents formation of the closed enzyme conformation by binding to the same site as the amobile flap. In contrast, mizoribine monophosphate (MZP) is a competitive inhibitor that induces the closed conformation. MPA is a potent inhibitor of mammalian IMPDHs but a poor inhibitor of the bacterial enzymes. MZP is a more potent inhibitor of bacterial IMPDH. Its function is as follows. Catalyzes the conversion of inosine 5'-phosphate (IMP) to xanthosine 5'-phosphate (XMP), the first committed and rate-limiting step in the de novo synthesis of guanine nucleotides, and therefore plays an important role in the regulation of cell growth. In contrast to the other IMPDH alleles IMD3 and IMD4, the enzymatic activity of IMD2 seems to be intrinsically drug resistant. The sequence is that of Inosine-5'-monophosphate dehydrogenase 2 from Saccharomyces cerevisiae (strain ATCC 204508 / S288c) (Baker's yeast).